We begin with the raw amino-acid sequence, 549 residues long: Glucose-6-phosphate isomerase (549 aa).

Residue glutamate 353 is the Proton donor of the active site. Active-site residues include histidine 384 and lysine 513.

Belongs to the GPI family.

The protein resides in the cytoplasm. The catalysed reaction is alpha-D-glucose 6-phosphate = beta-D-fructose 6-phosphate. It participates in carbohydrate biosynthesis; gluconeogenesis. The protein operates within carbohydrate degradation; glycolysis; D-glyceraldehyde 3-phosphate and glycerone phosphate from D-glucose: step 2/4. Its function is as follows. Catalyzes the reversible isomerization of glucose-6-phosphate to fructose-6-phosphate. In Brucella ovis (strain ATCC 25840 / 63/290 / NCTC 10512), this protein is Glucose-6-phosphate isomerase.